Reading from the N-terminus, the 104-residue chain is L-rhamnose mutarotase (104 aa).

Y18 serves as a coordination point for substrate. The active-site Proton donor is the H22. Substrate-binding positions include Y41 and 76–77; that span reads WW.

It belongs to the rhamnose mutarotase family. As to quaternary structure, homodimer.

Its subcellular location is the cytoplasm. The catalysed reaction is alpha-L-rhamnose = beta-L-rhamnose. The protein operates within carbohydrate metabolism; L-rhamnose metabolism. Involved in the anomeric conversion of L-rhamnose. This chain is L-rhamnose mutarotase, found in Bacillus subtilis (strain 168).